The primary structure comprises 78 residues: U7-lycotoxin-Ls1f (78 aa).

The signal sequence occupies residues 1–22 (MKLIIFTGLALLLIVSLIDVEA). A propeptide spanning residues 23–26 (QNEG) is cleaved from the precursor.

It belongs to the neurotoxin 19 (CSTX) family. 07 (U7-Lctx) subfamily. Post-translationally, contains 4 disulfide bonds. In terms of tissue distribution, expressed by the venom gland.

It is found in the secreted. This is U7-lycotoxin-Ls1f from Lycosa singoriensis (Wolf spider).